We begin with the raw amino-acid sequence, 199 residues long: Outer-membrane lipoprotein LolB (199 aa).

The N-terminal stretch at 1–28 is a signal peptide; it reads MAAAGSLCQTAWRVRGWLAAGLCALLAG. C29 carries N-palmitoyl cysteine lipidation. Residue C29 is the site of S-diacylglycerol cysteine attachment.

The protein belongs to the LolB family. As to quaternary structure, monomer.

It is found in the cell outer membrane. Its function is as follows. Plays a critical role in the incorporation of lipoproteins in the outer membrane after they are released by the LolA protein. The chain is Outer-membrane lipoprotein LolB from Bordetella petrii (strain ATCC BAA-461 / DSM 12804 / CCUG 43448).